Here is a 314-residue protein sequence, read N- to C-terminus: Methionyl-tRNA formyltransferase (314 aa).

Residue 110–113 (SLLP) coordinates (6S)-5,6,7,8-tetrahydrofolate.

It belongs to the Fmt family.

The enzyme catalyses L-methionyl-tRNA(fMet) + (6R)-10-formyltetrahydrofolate = N-formyl-L-methionyl-tRNA(fMet) + (6S)-5,6,7,8-tetrahydrofolate + H(+). In terms of biological role, attaches a formyl group to the free amino group of methionyl-tRNA(fMet). The formyl group appears to play a dual role in the initiator identity of N-formylmethionyl-tRNA by promoting its recognition by IF2 and preventing the misappropriation of this tRNA by the elongation apparatus. This is Methionyl-tRNA formyltransferase from Bacillus anthracis (strain A0248).